A 140-amino-acid chain; its full sequence is Small ribosomal subunit protein uS12m (140 aa).

Belongs to the universal ribosomal protein uS12 family.

Its subcellular location is the mitochondrion. The chain is Small ribosomal subunit protein uS12m (mrps12) from Dictyostelium citrinum (Slime mold).